Reading from the N-terminus, the 568-residue chain is Protein disconnected (568 aa).

Residues 16 to 77 (GHGPHSHQHV…PRRWGSPPIN (62 aa)) form a disordered region. Residues 19-29 (PHSHQHVHSHL) show a composition bias toward basic residues. Residues 30–45 (PSHPQPNAASPASSPG) are compositionally biased toward low complexity. Gly residues predominate over residues 46 to 62 (GSSGSGSGSAAGSGTGS). 2 C2H2-type zinc fingers span residues 92 to 115 (VQCS…SAVH) and 120 to 145 (HKCT…ANPN). Disordered regions lie at residues 134–157 (RRSR…RRKI), 220–364 (LLST…SDAF), 391–419 (SSAS…DSDS), and 501–568 (QQYN…PISV). Positions 235–246 (NEQDADPEDDND) are enriched in acidic residues. Positions 253 to 263 (QANSSSPAASS) are enriched in polar residues. The segment covering 282-292 (SLSLASSSSIA) has biased composition (low complexity). The span at 313-360 (SEQDREQEQEQEQEREREAEKEQEQDVESDKEHEPEQEHELEREKRSP) shows a compositional bias: basic and acidic residues. Over residues 391-402 (SSASSSSASASA) the composition is skewed to low complexity. Residues 520–550 (HLTLSHHHQEQHHHLGHHHMGHHHHHHHQHH) are compositionally biased toward basic residues. Residues 558–568 (SPAATNAPISV) are compositionally biased toward polar residues.

In terms of tissue distribution, expressed at low levels in the adult head and very low, but detectable, levels in the body.

The protein resides in the nucleus. Required for the establishment of stable connections between the larval optic nerves, the Bolwig's nerves, and their target cells in the brain during embryonic development. This is Protein disconnected (disco) from Drosophila melanogaster (Fruit fly).